A 252-amino-acid chain; its full sequence is Imidazole glycerol phosphate synthase subunit HisF (252 aa).

Active-site residues include Asp-11 and Asp-130.

The protein belongs to the HisA/HisF family. Heterodimer of HisH and HisF.

It localises to the cytoplasm. The catalysed reaction is 5-[(5-phospho-1-deoxy-D-ribulos-1-ylimino)methylamino]-1-(5-phospho-beta-D-ribosyl)imidazole-4-carboxamide + L-glutamine = D-erythro-1-(imidazol-4-yl)glycerol 3-phosphate + 5-amino-1-(5-phospho-beta-D-ribosyl)imidazole-4-carboxamide + L-glutamate + H(+). Its pathway is amino-acid biosynthesis; L-histidine biosynthesis; L-histidine from 5-phospho-alpha-D-ribose 1-diphosphate: step 5/9. In terms of biological role, IGPS catalyzes the conversion of PRFAR and glutamine to IGP, AICAR and glutamate. The HisF subunit catalyzes the cyclization activity that produces IGP and AICAR from PRFAR using the ammonia provided by the HisH subunit. In Geobacillus thermodenitrificans (strain NG80-2), this protein is Imidazole glycerol phosphate synthase subunit HisF.